A 478-amino-acid polypeptide reads, in one-letter code: Hepatitis A virus cellular receptor 1 (478 aa).

Residues 1-24 (MADPIMHLQVVILSLILHLADSVA) form the signal peptide. In terms of domain architecture, Ig-like V-type spans 25-126 (DSVNVDGVAG…WFNDMKITIS (102 aa)). At 25 to 397 (DSVNVDGVAG…SPQMVNTTEG (373 aa)) the chain is on the extracellular side. Disulfide bonds link Cys41–Cys110, Cys51–Cys62, and Cys57–Cys109. Residues Asn70 and Asn87 are each glycosylated (N-linked (GlcNAc...) asparagine). 28 tandem repeats follow at residues 148–155 (VPTTTTTT), 156–161 (LPTTTT), 162–167 (LPTTTT), 168–173 (LPTTMT), 174–179 (LPTTTT), 180–185 (LPMTTT), 186–191 (LPTTTT), 192–197 (VPMTTT), 198–201 (LPTT), 202–207 (LPTTTT), 208–211 (LPTT), 212–217 (LPTTTT), 218–221 (LPTT), 222–227 (LPTTTT), 228–233 (LPTTMT), 234–239 (LPMTTT), 240–245 (LPTTTT), 246–251 (LPTTTT), 252–257 (LPTTTT), 258–263 (LPTTTT), 264–268 (LPTTT), 269–273 (LPTMT), 274–279 (LPTTTT), 280–285 (LPTTMT), 286–291 (LPMTTT), 292–297 (LPTTTT), 298–303 (LPTTTT), and 304–309 (LPTTTM). The segment at 148–309 (VPTTTTTTLP…TTTTLPTTTM (162 aa)) is 28 X 6 AA approximate tandem repeats of L-P-[MT]-T-[MT]-T. The segment at 187–303 (PTTTTVPMTT…TTTTLPTTTT (117 aa)) is disordered. Disordered stretches follow at residues 320–339 (PMQD…PAET) and 344–370 (LLGA…TVTE). A compositionally biased stretch (polar residues) spans 348–370 (TRTQPTSSPLYSYTTDGSDTVTE). N-linked (GlcNAc...) asparagine glycosylation is found at Asn379 and Asn393. The chain crosses the membrane as a helical span at residues 398-418 (IYAGVCISVLVLLAVLGVVIA). Over 419–478 (KKYFFKKEIQQLSVSFSNHQFKTLQNAVKKEVHAEDNIYIENNLYAMNQDPVVLFESLRP) the chain is Cytoplasmic.

It belongs to the immunoglobulin superfamily. TIM family. In terms of assembly, interacts with STAM. Interacts with SELPLG.

The protein resides in the cell membrane. In terms of biological role, phosphatidylserine receptor that plays an important functional role in regulatory B-cells homeostasis including generation, expansion and suppressor functions. As P-selectin/SELPLG ligand, plays a specialized role in activated but not naive T-cell trafficking during inflammatory responses. Controls thereby T-cell accumulation in the inflamed central nervous system (CNS) and the induction of autoimmune disease. Also regulates expression of various anti-inflammatory cytokines and co-inhibitory ligands including IL10. Acts as a regulator of T-cell proliferation. May play a role in kidney injury and repair. The protein is Hepatitis A virus cellular receptor 1 (HAVCR1) of Chlorocebus aethiops (Green monkey).